Here is a 320-residue protein sequence, read N- to C-terminus: Polyprenyl transferase pyr6 (320 aa).

The next 6 helical transmembrane spans lie at 22 to 42 (KYNC…AAAS), 60 to 80 (GLAF…NDWI), 101 to 121 (LATR…VWLM), 127 to 147 (GQNL…YPFG), 155 to 175 (LGIY…LPAW), and 186 to 206 (PDLL…TIYF). An N-linked (GlcNAc...) asparagine glycan is attached at Asn224. A helical membrane pass occupies residues 233–253 (YVHGLLLLQAVAVVMVIPWIL). Asn256 carries N-linked (GlcNAc...) asparagine glycosylation. Transmembrane regions (helical) follow at residues 260 to 280 (WLWF…LYLF) and 296 to 316 (FALG…VSGS).

Belongs to the UbiA prenyltransferase family. It depends on Mg(2+) as a cofactor.

The protein resides in the membrane. It catalyses the reaction 4-hydroxy-6-(pyridin-3-yl)-2H-pyran-2-one + (2E,6E)-farnesyl diphosphate = 4-hydroxy-3-[(2E,6E)-farnesyl]-6-(pyridin-3-yl)-2H-pyran-2-one + diphosphate. It participates in secondary metabolite biosynthesis; terpenoid biosynthesis. In terms of biological role, polyprenyl transferase; part of the gene cluster that mediates the biosynthesis of pyripyropene A, a specific human acyl-coenzyme A:cholesterol acyltransferase 2 inhibitor. The first step of the pathway is the synthesis of nicotinyl-CoA from nicotinic acid by the nicotinic acid-CoA ligase pyr1. Nicotinyl-CoA is then a substrate of polyketide synthase pyr2 to produce 4-hydroxy-6-(3-pyridinyl)-2H-pyran-2-one (HPPO) which is further prenylated by the polyprenyl transferase pyr6 to yield farnesyl-HPPO. The next steps consist of an epoxidation of farnesyl-HPPO to epoxyfarnesyl-HPPO by FAD-dependent monooxygenase pyr5 and a cyclization of the terpenoid portion by the terpene cyclase pyr4 to yield deacetyl-pyripyropene E. The 2 cytochrome P450 monooxygenases pyr3 and pyr9, and the 2 acetyltransferases pyr7 and pyr8 are involved in the conversion of deacetyl-pyripyropene E into pyripyropene A through several cycles of oxidation and acetylation steps. Pyr7 acetylates deacetyl-pyripyropene E to pyripyropene E which is oxidized to 11-deacetyl-pyripyropene O by pyr3, which is in turn acetylated into pyripyropene O by pyr8. Pyripyropene O is then oxidized to deacetyl-pyripyropene A by pyr9. Deacetyl-pyripyropene A is finally acetylated to pyripyropene A by pyr8. In Aspergillus fumigatus (strain ATCC MYA-4609 / CBS 101355 / FGSC A1100 / Af293) (Neosartorya fumigata), this protein is Polyprenyl transferase pyr6.